Consider the following 394-residue polypeptide: Ceramide glucosyltransferase-A (394 aa).

The Lumenal segment spans residues 1 to 10; that stretch reads MAVLDLALQG. The chain crosses the membrane as a helical span at residues 11–32; sequence LAIFGCVLFFVLWFMHFLSIVY. Residues 33-195 lie on the Cytoplasmic side of the membrane; that stretch reads TRLHLNKKIS…QVYFGTSHPR (163 aa). D92 is a short sequence motif (D1). Position 144 (D144) is a short sequence motif, D2. A helical membrane pass occupies residues 196-215; it reads SYISANVTGFKCVTGMSCLM. The Lumenal segment spans residues 216-287; that stretch reads RKEVLDQAGG…KLRINMLPAT (72 aa). A short sequence motif (D3) is located at residue D236. The active-site Proton acceptor is D236. Positions 272–276 match the (Q/R)XXRW motif; the sequence is RMIRW. A helical transmembrane segment spans residues 288–304; the sequence is IICEPISECFVASLIIG. At 305-309 the chain is on the cytoplasmic side; that stretch reads WAAHH. A helical transmembrane segment spans residues 310-328; sequence IFRWDIMVFFMCHCLAWFI. At 329–348 the chain is on the lumenal side; sequence FDYIQLRGVQGGPLNFSKLD. Residues 349–369 form a helical membrane-spanning segment; sequence YAVAWFIRESMTIYIFLSALW. The Cytoplasmic segment spans residues 370–394; it reads DPTISWRTGRFRLRCGGTAEEILDV.

Belongs to the glycosyltransferase 2 family. At the late gastrula stage, weakly expressed ubiquitously. As neurulation proceeds (stages 15-16), expression moves towards the dorsal structures: involuted paraxial mesoderm and neural folds. In the tailbud embryo (stage 28), expression is restricted to the notochord. At later stages (stage 35), expression remains in the notochord and also appears weakly in the cephalic region.

It is found in the golgi apparatus membrane. The enzyme catalyses an N-acylsphing-4-enine + UDP-alpha-D-glucose = a beta-D-glucosyl-(1&lt;-&gt;1')-N-acylsphing-4-enine + UDP + H(+). The catalysed reaction is UDP-alpha-D-xylose + an N-acylsphing-4-enine = a beta-D-xylosyl-(1&lt;-&gt;1')-N-acylsphing-4-enine + UDP + H(+). It catalyses the reaction N-(9Z-octadecenoyl)-sphing-4-enine + UDP-alpha-D-xylose = beta-D-xylosyl-(1&lt;-&gt;1')-N-(9Z-octadecenoyl)-sphing-4-enine + UDP + H(+). The protein operates within lipid metabolism; sphingolipid metabolism. Participates in the initial step of the glucosylceramide-based glycosphingolipid/GSL synthetic pathway at the cytosolic surface of the Golgi. Catalyzes the transfer of glucose from UDP-glucose to ceramide to produce glucosylceramide/GlcCer (such as beta-D-glucosyl-(1&lt;-&gt;1')-N-acylsphing-4-enine). Glucosylceramide is the core component of glycosphingolipids/GSLs, amphipathic molecules consisting of a ceramide lipid moiety embedded in the outer leaflet of the membrane, linked to one of hundreds of different externally oriented oligosaccharide structures. Glycosphingolipids are essential components of membrane microdomains that mediate membrane trafficking and signal transduction. They are implicated in many fundamental cellular processes, including growth, differentiation, migration, morphogenesis, cell-to-cell and cell-to-matrix interactions. Glycosphingolipids are required for convergence extension movements during early development. Catalyzes the synthesis of xylosylceramide/XylCer (such as beta-D-xylosyl-(1&lt;-&gt;1')-N-acylsphing-4-enine) using UDP-Xyl as xylose donor. This chain is Ceramide glucosyltransferase-A (ugcg-a), found in Xenopus laevis (African clawed frog).